Consider the following 289-residue polypeptide: Acetylglutamate kinase (289 aa).

Residues 65–66 (GG), Arg-87, and Asn-187 contribute to the substrate site.

This sequence belongs to the acetylglutamate kinase family. ArgB subfamily.

The protein resides in the cytoplasm. It carries out the reaction N-acetyl-L-glutamate + ATP = N-acetyl-L-glutamyl 5-phosphate + ADP. Its pathway is amino-acid biosynthesis; L-arginine biosynthesis; N(2)-acetyl-L-ornithine from L-glutamate: step 2/4. Its function is as follows. Catalyzes the ATP-dependent phosphorylation of N-acetyl-L-glutamate. This Chromobacterium violaceum (strain ATCC 12472 / DSM 30191 / JCM 1249 / CCUG 213 / NBRC 12614 / NCIMB 9131 / NCTC 9757 / MK) protein is Acetylglutamate kinase.